The following is a 420-amino-acid chain: Protein Rv2184c (420 aa).

Belongs to the arsA ATPase family.

This Mycobacterium tuberculosis (strain ATCC 25618 / H37Rv) protein is Protein Rv2184c.